The following is a 273-amino-acid chain: 3-keto-5-aminohexanoate cleavage enzyme (273 aa).

Glu-14 is a binding site for (5S)-5-amino-3-oxohexanoate. Zn(2+)-binding residues include His-46 and His-48. (5S)-5-amino-3-oxohexanoate-binding residues include Ser-82, Gly-85, and Ser-106. A Zn(2+)-binding site is contributed by Glu-227.

The protein belongs to the BKACE family. Kce subfamily. As to quaternary structure, homotetramer. Zn(2+) serves as cofactor.

The catalysed reaction is (5S)-5-amino-3-oxohexanoate + acetyl-CoA = (3S)-3-aminobutanoyl-CoA + acetoacetate. The protein operates within amino-acid degradation; L-lysine degradation via acetate pathway. Involved in the anaerobic fermentation of lysine. Catalyzes the reversible reaction between 3-keto-5-aminohexanoate (KAH) and acetyl-CoA to form 3-aminobutyryl-CoA and acetoacetate. The reaction involves the deprotonation of KAH, the nucleophilic addition onto acetyl-CoA and the intramolecular transfer of the CoA moiety. The polypeptide is 3-keto-5-aminohexanoate cleavage enzyme (Acetoanaerobium sticklandii (strain ATCC 12662 / DSM 519 / JCM 1433 / CCUG 9281 / NCIMB 10654 / HF) (Clostridium sticklandii)).